The primary structure comprises 226 residues: V-type proton ATPase subunit E (226 aa).

The protein belongs to the V-ATPase E subunit family. In terms of assembly, V-ATPase is a heteromultimeric enzyme made up of two complexes: the ATP-hydrolytic V1 complex and the proton translocation V0 complex. The V1 complex consists of three catalytic AB heterodimers that form a heterohexamer, three peripheral stalks each consisting of EG heterodimers, one central rotor including subunits D and F, and the regulatory subunits C and H. The proton translocation complex V0 consists of the proton transport subunit a, a ring of proteolipid subunits c9c'', rotary subunit d, subunits e and f, and the accessory subunits vah-19/Ac45 and vah-20/PRR. As to expression, expressed in the excretory cell and syncytial hypodermal cells (at protein level). Expressed in the intestine (at protein level).

The protein localises to the cytoplasm. Its subcellular location is the apical cell membrane. In terms of biological role, subunit of the V1 complex of vacuolar(H+)-ATPase (V-ATPase), a multisubunit enzyme composed of a peripheral complex (V1) that hydrolyzes ATP and a membrane integral complex (V0) that translocates protons. V-ATPase is responsible for acidifying and maintaining the pH of intracellular compartments and in some cell types, is targeted to the plasma membrane, where it is responsible for acidifying the extracellular environment. Regulates pH homeostasis in the intestine. Probably by regulating cytoplasmic pH, required for cell survival in the intestine and hypodermis. Involved in receptor-mediated endocytosis. Involved in embryogenesis and larval development. This Caenorhabditis elegans protein is V-type proton ATPase subunit E.